Consider the following 566-residue polypeptide: Proline--tRNA ligase (566 aa).

It belongs to the class-II aminoacyl-tRNA synthetase family. ProS type 1 subfamily. Homodimer.

The protein localises to the cytoplasm. The catalysed reaction is tRNA(Pro) + L-proline + ATP = L-prolyl-tRNA(Pro) + AMP + diphosphate. Its function is as follows. Catalyzes the attachment of proline to tRNA(Pro) in a two-step reaction: proline is first activated by ATP to form Pro-AMP and then transferred to the acceptor end of tRNA(Pro). As ProRS can inadvertently accommodate and process non-cognate amino acids such as alanine and cysteine, to avoid such errors it has two additional distinct editing activities against alanine. One activity is designated as 'pretransfer' editing and involves the tRNA(Pro)-independent hydrolysis of activated Ala-AMP. The other activity is designated 'posttransfer' editing and involves deacylation of mischarged Ala-tRNA(Pro). The misacylated Cys-tRNA(Pro) is not edited by ProRS. The protein is Proline--tRNA ligase of Campylobacter concisus (strain 13826).